The chain runs to 257 residues: MVLIRVLANLLLLQLSYAQKSSELVIGGDECNINEHPFLAFVTSDRRRCAGTLINQEWVLTAAHCNGKYMKIELGVHDKMVRNEDKQTRVPKQKFFCLSSKEYTMWDKDIMLIRLNTPVNNSTHIAPVSLASRPPVVGSVCRIMGWGTISSPKVILPDVPHCANIEIIKYSKCQGVHPELPAKGRVVCAGIWQGGKDSCHGDSGAPLICNGQLQGLLSWGGDPCAQPLQPGLYTDIFDYSDWIQSIIAGNTTATCPP.

Residues 1 to 18 (MVLIRVLANLLLLQLSYA) form the signal peptide. Residues 19–24 (QKSSEL) constitute a propeptide that is removed on maturation. In terms of domain architecture, Peptidase S1 spans 25-248 (VIGGDECNIN…YSDWIQSIIA (224 aa)). 6 disulfides stabilise this stretch: Cys31–Cys162, Cys49–Cys65, Cys97–Cys255, Cys141–Cys209, Cys173–Cys188, and Cys199–Cys224. Residues His64 and Asp109 each act as charge relay system in the active site. 2 N-linked (GlcNAc...) asparagine glycosylation sites follow: Asn120 and Asn121. Ser203 (charge relay system) is an active-site residue. An N-linked (GlcNAc...) asparagine glycan is attached at Asn250.

It belongs to the peptidase S1 family. Snake venom subfamily. Monomer. Expressed by the venom gland.

It localises to the secreted. In terms of biological role, snake venom serine protease that may act in the hemostasis system of the prey. In Vipera nikolskii (Nikolsky's adder), this protein is Snake venom serine protease nikobin (sp-VN).